A 143-amino-acid polypeptide reads, in one-letter code: MELNGIKPADGAKHYKRRVGRGIGSGIGKTAGRGHKGQKSRAGGYHKVGFEGGQMPMQRRLPKRGFKSQLLKFNAEVTLSALEQLGASEVDLVTLKQAGLVGELAKVVKVIMTGKISKAVKLTGIGATAAAKVAIEAAGGSLA.

The interval 1-59 is disordered; it reads MELNGIKPADGAKHYKRRVGRGIGSGIGKTAGRGHKGQKSRAGGYHKVGFEGGQMPMQR. The segment covering 21–31 has biased composition (gly residues); that stretch reads RGIGSGIGKTA.

Belongs to the universal ribosomal protein uL15 family. In terms of assembly, part of the 50S ribosomal subunit.

Functionally, binds to the 23S rRNA. The polypeptide is Large ribosomal subunit protein uL15 (Albidiferax ferrireducens (strain ATCC BAA-621 / DSM 15236 / T118) (Rhodoferax ferrireducens)).